The chain runs to 235 residues: Probable tetraspanin tspA (235 aa).

At 1–18 the chain is on the cytoplasmic side; the sequence is MVDTSNLLPQTPRLLKVP. Residues 19–39 traverse the membrane as a helical segment; sequence LIILNIILWILGLVLVIVGGI. The Extracellular segment spans residues 40–68; it reads CVSFLSNFKDFTKASDAKSALSNLTTSIP. N-linked (GlcNAc...) asparagine glycosylation occurs at N62. Residues 69-89 traverse the membrane as a helical segment; it reads AGVLVIGILFVIFTVVGCFVA. Topologically, residues 90-93 are cytoplasmic; it reads YKEK. A helical membrane pass occupies residues 94–114; sequence LVGLVIYCAVMLILLVILIGV. Topologically, residues 115–200 are extracellular; it reads GGKAITLHND…FSSKIYAVGA (86 aa). N139, N143, and N160 each carry an N-linked (GlcNAc...) asparagine glycan. Residues 201–221 traverse the membrane as a helical segment; sequence AGLAIGIIELVAILFSLFLII. Over 222–235 the chain is Cytoplasmic; it reads RICRSPRTRSYDQY.

This sequence belongs to the tetraspanin (TM4SF) family.

The protein resides in the membrane. This Dictyostelium discoideum (Social amoeba) protein is Probable tetraspanin tspA (tspA).